Consider the following 211-residue polypeptide: UPF0637 protein BLi01683/BL05149 (211 aa).

It belongs to the UPF0637 family.

This is UPF0637 protein BLi01683/BL05149 from Bacillus licheniformis (strain ATCC 14580 / DSM 13 / JCM 2505 / CCUG 7422 / NBRC 12200 / NCIMB 9375 / NCTC 10341 / NRRL NRS-1264 / Gibson 46).